Here is a 280-residue protein sequence, read N- to C-terminus: DegV domain-containing protein spyM18_1709 (280 aa).

Positions 3–280 constitute a DegV domain; sequence WKIVTDSGCD…DGGLLMGYEI (278 aa). Hexadecanoate contacts are provided by Ser-63 and Ser-91.

In terms of biological role, may bind long-chain fatty acids, such as palmitate, and may play a role in lipid transport or fatty acid metabolism. In Streptococcus pyogenes serotype M18 (strain MGAS8232), this protein is DegV domain-containing protein spyM18_1709.